Here is a 103-residue protein sequence, read N- to C-terminus: ATP-dependent Clp protease adapter protein ClpS 1 (103 aa).

Belongs to the ClpS family. Binds to the N-terminal domain of the chaperone ClpA.

Involved in the modulation of the specificity of the ClpAP-mediated ATP-dependent protein degradation. This is ATP-dependent Clp protease adapter protein ClpS 1 from Rhodopseudomonas palustris (strain ATCC BAA-98 / CGA009).